The chain runs to 656 residues: Nexilin (656 aa).

Disordered regions lie at residues 1 to 131 (MNDV…IEQD), 165 to 198 (RAAA…EEEC), and 215 to 284 (TEAK…VFKE). Residues 11–26 (LLSSSKPVPKSYVPKL) show a composition bias toward low complexity. The span at 27–78 (GKGDVKDKFEAMQRAREERNQRRSRDEKQRRKEQYIREREWNRRKQEIKDML) shows a compositional bias: basic and acidic residues. A Phosphoserine modification is found at Ser-80. Composition is skewed to basic and acidic residues over residues 103–131 (GKFD…IEQD), 169–198 (NRKD…EEEC), and 216–269 (EAKK…RNMV). A phosphoserine mark is found at Ser-221, Ser-330, Ser-337, and Ser-345. Phosphothreonine is present on Thr-350. 2 disordered regions span residues 468–492 (NFHE…HKVN) and 529–564 (AALQ…APWF). Phosphoserine is present on residues Ser-544 and Ser-549. Position 551 is a phosphothreonine (Thr-551). An Ig-like domain is found at 562-650 (PWFKKPLRNT…GSAASTCILT (89 aa)).

As to quaternary structure, interacts with F-actin. As to expression, expressed in brain, testis, spleen and fibroblasts (at protein level). Not detected in liver, kidney or epithelial cells (at protein level).

It localises to the cytoplasm. The protein resides in the cytoskeleton. Its subcellular location is the cell junction. It is found in the adherens junction. The protein localises to the myofibril. It localises to the sarcomere. The protein resides in the z line. In terms of biological role, involved in regulating cell migration through association with the actin cytoskeleton. Has an essential role in the maintenance of Z line and sarcomere integrity. This chain is Nexilin, found in Rattus norvegicus (Rat).